The chain runs to 150 residues: Large ribosomal subunit protein eL19 (150 aa).

Positions 55-89 (IKGQSRYRAKIRHEQKKKGRHRGPGSRKGKKTARM) are disordered.

Belongs to the eukaryotic ribosomal protein eL19 family. As to quaternary structure, part of the 50S ribosomal subunit.

Its function is as follows. Binds to the 23S rRNA. The chain is Large ribosomal subunit protein eL19 from Pyrococcus furiosus (strain ATCC 43587 / DSM 3638 / JCM 8422 / Vc1).